The chain runs to 144 residues: Large ribosomal subunit protein uL15 (144 aa).

Residues 1–53 (MYLNTLAPAEGAKHSAKRLGRGIGSGLGKTGGRGHKGQKSRTGGGVRRGFEGG) form a disordered region. Positions 21–31 (RGIGSGLGKTG) are enriched in gly residues.

The protein belongs to the universal ribosomal protein uL15 family. In terms of assembly, part of the 50S ribosomal subunit.

Functionally, binds to the 23S rRNA. The polypeptide is Large ribosomal subunit protein uL15 (Mannheimia succiniciproducens (strain KCTC 0769BP / MBEL55E)).